The following is a 440-amino-acid chain: Chromosome partition protein MukF (440 aa).

Residues L208 to I236 are leucine-zipper.

It belongs to the MukF family. In terms of assembly, interacts, and probably forms a ternary complex, with MukE and MukB via its C-terminal region. The complex formation is stimulated by calcium or magnesium. It is required for an interaction between MukE and MukB.

It is found in the cytoplasm. Its subcellular location is the nucleoid. In terms of biological role, involved in chromosome condensation, segregation and cell cycle progression. May participate in facilitating chromosome segregation by condensation DNA from both sides of a centrally located replisome during cell division. Not required for mini-F plasmid partitioning. Probably acts via its interaction with MukB and MukE. Overexpression results in anucleate cells. It has a calcium binding activity. This is Chromosome partition protein MukF from Klebsiella pneumoniae subsp. pneumoniae (strain ATCC 700721 / MGH 78578).